The primary structure comprises 257 residues: Imidazole glycerol phosphate synthase subunit HisF (257 aa).

Active-site residues include D11 and D130.

This sequence belongs to the HisA/HisF family. In terms of assembly, heterodimer of HisH and HisF.

The protein resides in the cytoplasm. The catalysed reaction is 5-[(5-phospho-1-deoxy-D-ribulos-1-ylimino)methylamino]-1-(5-phospho-beta-D-ribosyl)imidazole-4-carboxamide + L-glutamine = D-erythro-1-(imidazol-4-yl)glycerol 3-phosphate + 5-amino-1-(5-phospho-beta-D-ribosyl)imidazole-4-carboxamide + L-glutamate + H(+). Its pathway is amino-acid biosynthesis; L-histidine biosynthesis; L-histidine from 5-phospho-alpha-D-ribose 1-diphosphate: step 5/9. Its function is as follows. IGPS catalyzes the conversion of PRFAR and glutamine to IGP, AICAR and glutamate. The HisF subunit catalyzes the cyclization activity that produces IGP and AICAR from PRFAR using the ammonia provided by the HisH subunit. The polypeptide is Imidazole glycerol phosphate synthase subunit HisF (Aliivibrio fischeri (strain ATCC 700601 / ES114) (Vibrio fischeri)).